A 272-amino-acid polypeptide reads, in one-letter code: Imidazole glycerol phosphate synthase subunit HisF (272 aa).

Catalysis depends on residues Asp12 and Asp131.

This sequence belongs to the HisA/HisF family. In terms of assembly, heterodimer of HisH and HisF.

The protein localises to the cytoplasm. The catalysed reaction is 5-[(5-phospho-1-deoxy-D-ribulos-1-ylimino)methylamino]-1-(5-phospho-beta-D-ribosyl)imidazole-4-carboxamide + L-glutamine = D-erythro-1-(imidazol-4-yl)glycerol 3-phosphate + 5-amino-1-(5-phospho-beta-D-ribosyl)imidazole-4-carboxamide + L-glutamate + H(+). Its pathway is amino-acid biosynthesis; L-histidine biosynthesis; L-histidine from 5-phospho-alpha-D-ribose 1-diphosphate: step 5/9. Functionally, IGPS catalyzes the conversion of PRFAR and glutamine to IGP, AICAR and glutamate. The HisF subunit catalyzes the cyclization activity that produces IGP and AICAR from PRFAR using the ammonia provided by the HisH subunit. In Methanopyrus kandleri (strain AV19 / DSM 6324 / JCM 9639 / NBRC 100938), this protein is Imidazole glycerol phosphate synthase subunit HisF.